A 257-amino-acid polypeptide reads, in one-letter code: Nickel import system ATP-binding protein NikD (257 aa).

Residues 4–245 (IDIQNLTIKN…HLHPYTEQLI (242 aa)) enclose the ABC transporter domain. 37-44 (GESGAGKS) contacts ATP.

It belongs to the ABC transporter superfamily. In terms of assembly, the complex is composed of two ATP-binding proteins (NikD and NikE), two transmembrane proteins (NikB and NikC) and a solute-binding protein (NikA).

The protein resides in the cell membrane. The catalysed reaction is Ni(2+)(out) + ATP + H2O = Ni(2+)(in) + ADP + phosphate + H(+). Functionally, part of the ABC transporter complex NikABCDE (Opp2) involved in nickel import. Probably responsible for energy coupling to the transport system. This chain is Nickel import system ATP-binding protein NikD, found in Staphylococcus aureus (strain bovine RF122 / ET3-1).